The primary structure comprises 2233 residues: Acetyl-CoA carboxylase (2233 aa).

Position 2 is an N-acetylserine (Ser-2). Ser-2 is subject to Phosphoserine. One can recognise a Biotin carboxylation domain in the interval 58–567; sequence VISKILIANN…TTGWLDDLIT (510 aa). In terms of domain architecture, ATP-grasp spans 216-408; the sequence is KTGLVSVDDD…LPAAQLQIAM (193 aa). 256-261 contributes to the ATP binding site; the sequence is GGGGKG. Mn(2+) contacts are provided by Glu-365, Glu-379, and Asn-381. Residue Arg-383 is part of the active site. The 75-residue stretch at 694-768 folds into the Biotinyl-binding domain; it reads LEVENDPTQL…VAGDIMAIMT (75 aa). Lys-735 carries the post-translational modification N6-biotinyllysine. A phosphoserine mark is found at Ser-790, Ser-1148, Ser-1157, and Ser-1162. Residues 1486-1822 form the CoA carboxyltransferase N-terminal domain; it reads PYPVKEWLQP…KRNMPVPILE (337 aa). The interval 1486–2141 is carboxyltransferase; that stretch reads PYPVKEWLQP…EEYLIKRLSH (656 aa). 1627-1629 is an acetyl-CoA binding site; it reads ARI. A CoA-binding site is contributed by Arg-1731. The CoA carboxyltransferase C-terminal domain maps to 1826 to 2141; sequence TWDRPVDFTP…EEYLIKRLSH (316 aa). Gly-1998 contributes to the acetyl-CoA binding site. Positions 2034 and 2036 each coordinate CoA.

In terms of assembly, homodimer. Requires biotin as cofactor. It depends on Mn(2+) as a cofactor.

It localises to the cytoplasm. It is found in the endoplasmic reticulum membrane. It carries out the reaction hydrogencarbonate + acetyl-CoA + ATP = malonyl-CoA + ADP + phosphate + H(+). The enzyme catalyses N(6)-biotinyl-L-lysyl-[protein] + hydrogencarbonate + ATP = N(6)-carboxybiotinyl-L-lysyl-[protein] + ADP + phosphate + H(+). It participates in lipid metabolism; malonyl-CoA biosynthesis; malonyl-CoA from acetyl-CoA: step 1/1. By phosphorylation. The catalytic activity is inhibited by soraphen A, a polyketide isolated from the myxobacterium Sorangium cellulosum and a potent inhibitor of fungal growth. Its function is as follows. Carries out three functions: biotin carboxyl carrier protein, biotin carboxylase and carboxyltransferase. Involved in the synthesis of very-long-chain fatty acid synthesis which is required to maintain a functional nuclear envelope. Required for acylation and vacuolar membrane association of VAC8 which is necessary to maintain a normal morphology of the vacuole. The chain is Acetyl-CoA carboxylase (ACC1) from Saccharomyces cerevisiae (strain ATCC 204508 / S288c) (Baker's yeast).